The primary structure comprises 273 residues: WIMGHMVNAIAQIDEFVNLGANSIETDVSFDSSANPEYTYHGIPCDCGRTCTKWEHFNEFLKGLRKATTPGDSKYHEKLVLVVFDLKTGSLYDNQASDAGKKLAKSLLQNYWNNGNNGGRAYIVLSIPNLAHYKLITGFKEALTSEGHPELMDKVGYDFSGNDDIGDVANAYKKAGVTGHVWQSDGITNCLLRGLDRVRKAVANRDSSNGYINKVYYWTVDKRQSTRDALDAGVDGIMTNYPDVIADVLNESAYKAKFRIASYDDNPWETFKN.

The active site involves histidine 5. Mg(2+) is bound by residues glutamate 25 and aspartate 27. Catalysis depends on histidine 41, which acts as the Nucleophile. Disulfide bonds link cysteine 45/cysteine 51 and cysteine 47/cysteine 190. Aspartate 85 provides a ligand contact to Mg(2+). Asparagine 250 is a glycosylation site (N-linked (GlcNAc...) asparagine).

This sequence belongs to the arthropod phospholipase D family. Class II subfamily. Mg(2+) is required as a cofactor. Expressed by the venom gland.

It is found in the secreted. It carries out the reaction an N-(acyl)-sphingosylphosphocholine = an N-(acyl)-sphingosyl-1,3-cyclic phosphate + choline. It catalyses the reaction an N-(acyl)-sphingosylphosphoethanolamine = an N-(acyl)-sphingosyl-1,3-cyclic phosphate + ethanolamine. The catalysed reaction is a 1-acyl-sn-glycero-3-phosphocholine = a 1-acyl-sn-glycero-2,3-cyclic phosphate + choline. The enzyme catalyses a 1-acyl-sn-glycero-3-phosphoethanolamine = a 1-acyl-sn-glycero-2,3-cyclic phosphate + ethanolamine. Functionally, dermonecrotic toxins cleave the phosphodiester linkage between the phosphate and headgroup of certain phospholipids (sphingolipid and lysolipid substrates), forming an alcohol (often choline) and a cyclic phosphate. This toxin acts on sphingomyelin (SM). It may also act on ceramide phosphoethanolamine (CPE), lysophosphatidylcholine (LPC) and lysophosphatidylethanolamine (LPE), but not on lysophosphatidylserine (LPS), and lysophosphatidylglycerol (LPG). It acts by transphosphatidylation, releasing exclusively cyclic phosphate products as second products. Induces dermonecrosis, hemolysis, increased vascular permeability, edema, inflammatory response, and platelet aggregation. This Loxosceles apachea (Apache recluse spider) protein is Dermonecrotic toxin LapSicTox-alphaIB1b2.